The sequence spans 168 residues: Group IIF secretory phospholipase A2 (168 aa).

The first 20 residues, 1–20 (MKKFFAIAVLAGSVVTTAHS), serve as a signal peptide directing secretion. 7 disulfides stabilise this stretch: Cys-46–Cys-138, Cys-48–Cys-64, Cys-63–Cys-120, Cys-69–Cys-145, Cys-70–Cys-113, Cys-79–Cys-106, and Cys-98–Cys-111. 3 residues coordinate Ca(2+): Tyr-47, Gly-49, and Gly-51. His-67 is a catalytic residue. Asp-68 contributes to the Ca(2+) binding site. Residues Asn-92 and Asn-102 are each glycosylated (N-linked (GlcNAc...) asparagine). Residue Asp-114 is part of the active site. Residues 139-168 (QGPTPNCSIYDPYPEEVTCGHGLPATPVST) are required for localization on the plasma membrane. An N-linked (GlcNAc...) asparagine glycan is attached at Asn-144.

Belongs to the phospholipase A2 family. Ca(2+) is required as a cofactor. In terms of tissue distribution, strongly expressed in testis.

It is found in the secreted. The protein resides in the cell membrane. It catalyses the reaction a 1,2-diacyl-sn-glycero-3-phosphocholine + H2O = a 1-acyl-sn-glycero-3-phosphocholine + a fatty acid + H(+). The catalysed reaction is 1-hexadecanoyl-2-(9Z-octadecenoyl)-sn-glycero-3-phospho-(1'-sn-glycerol) + H2O = 1-hexadecanoyl-sn-glycero-3-phospho-(1'-sn-glycerol) + (9Z)-octadecenoate + H(+). The enzyme catalyses 1-hexadecanoyl-2-(9Z,12Z-octadecadienoyl)-sn-glycero-3-phosphoethanolamine + H2O = 1-hexadecanoyl-sn-glycero-3-phosphoethanolamine + (9Z,12Z)-octadecadienoate + H(+). It carries out the reaction 1-hexadecanoyl-2-(5Z,8Z,11Z,14Z-eicosatetraenoyl)-sn-glycero-3-phosphoethanolamine + H2O = 1-hexadecanoyl-sn-glycero-3-phosphoethanolamine + (5Z,8Z,11Z,14Z)-eicosatetraenoate + H(+). It catalyses the reaction 1-hexadecanoyl-2-(9Z-octadecenoyl)-sn-glycero-3-phosphocholine + H2O = 1-hexadecanoyl-sn-glycero-3-phosphocholine + (9Z)-octadecenoate + H(+). The catalysed reaction is 1-hexadecanoyl-2-(9Z-octadecenoyl)-sn-glycero-3-phospho-L-serine + H2O = 1-hexadecanoyl-sn-glycero-3-phospho-L-serine + (9Z)-octadecenoate + H(+). Its function is as follows. Secretory calcium-dependent phospholipase A2 that primarily targets extracellular phospholipids. Hydrolyzes the ester bond of the fatty acyl group attached at the sn-2 position of phospholipids (phospholipase A2 activity), the catalytic efficiency decreasing in the following order: phosphatidylglycerols &gt; phosphatidylethanolamines &gt; phosphatidylcholines &gt; phosphatidylserines. May play a role in lipid mediator production in inflammatory conditions, by providing arachidonic acid to downstream cyclooxygenases and lipoxygenases. In Mus musculus (Mouse), this protein is Group IIF secretory phospholipase A2 (Pla2g2f).